The chain runs to 109 residues: T-cell surface glycoprotein CD1b (109 aa).

Residues methionine 1–asparagine 18 form the signal peptide. N-linked (GlcNAc...) asparagine glycosylation is found at asparagine 38 and asparagine 75.

As to quaternary structure, heterodimer with B2M (beta-2-microglobulin). Interacts with saposin C. In terms of tissue distribution, expressed on cortical thymocytes, on certain T-cell leukemias, and in various other tissues.

The protein resides in the cell membrane. The protein localises to the endosome membrane. Its subcellular location is the lysosome membrane. In terms of biological role, antigen-presenting protein that binds self and non-self lipid and glycolipid antigens and presents them to T-cell receptors on natural killer T-cells. The chain is T-cell surface glycoprotein CD1b (CD1B) from Oryctolagus cuniculus (Rabbit).